The primary structure comprises 155 residues: Small ribosomal subunit protein uS7 (155 aa).

It belongs to the universal ribosomal protein uS7 family. As to quaternary structure, part of the 30S ribosomal subunit. Contacts proteins S9 and S11.

Functionally, one of the primary rRNA binding proteins, it binds directly to 16S rRNA where it nucleates assembly of the head domain of the 30S subunit. Is located at the subunit interface close to the decoding center, probably blocks exit of the E-site tRNA. This Xanthomonas campestris pv. campestris (strain 8004) protein is Small ribosomal subunit protein uS7.